Here is a 125-residue protein sequence, read N- to C-terminus: Ribonuclease P protein component (125 aa).

It belongs to the RnpA family. In terms of assembly, consists of a catalytic RNA component (M1 or rnpB) and a protein subunit.

The enzyme catalyses Endonucleolytic cleavage of RNA, removing 5'-extranucleotides from tRNA precursor.. RNaseP catalyzes the removal of the 5'-leader sequence from pre-tRNA to produce the mature 5'-terminus. It can also cleave other RNA substrates such as 4.5S RNA. The protein component plays an auxiliary but essential role in vivo by binding to the 5'-leader sequence and broadening the substrate specificity of the ribozyme. The sequence is that of Ribonuclease P protein component from Clostridium beijerinckii (strain ATCC 51743 / NCIMB 8052) (Clostridium acetobutylicum).